We begin with the raw amino-acid sequence, 346 residues long: DnaJ protein ERDJ3B (346 aa).

The N-terminal stretch at 1 to 23 is a signal peptide; sequence MAIRWSELCIVLFALSYAICVLA. A J domain is found at 26–91; it reads SYYDVLQVPK…EKREIYNKYG (66 aa). N-linked (GlcNAc...) asparagine glycosylation is present at N267.

As to quaternary structure, interacts with SDF2 and MED37A/BIP1. N-glycosylated. In terms of tissue distribution, expressed in leaves, flower buds and flowers.

Its subcellular location is the endoplasmic reticulum lumen. Regulates protein folding in the endoplasmic reticulum (ER) lumen. Forms a complex in the ER with SDF2 and MED37A/BIP1 which is required for the proper accumulation and function of the surface-exposed leucine-rich repeat receptor kinases EFR involved in pathogen-associated molecular pattern (PAMP) triggered immunity. In Arabidopsis thaliana (Mouse-ear cress), this protein is DnaJ protein ERDJ3B (ERDJ3B).